A 128-amino-acid polypeptide reads, in one-letter code: Large ribosomal subunit protein bL12 (128 aa).

The protein belongs to the bacterial ribosomal protein bL12 family. In terms of assembly, homodimer. Part of the ribosomal stalk of the 50S ribosomal subunit. Forms a multimeric L10(L12)X complex, where L10 forms an elongated spine to which 2 to 4 L12 dimers bind in a sequential fashion. Binds GTP-bound translation factors.

Forms part of the ribosomal stalk which helps the ribosome interact with GTP-bound translation factors. Is thus essential for accurate translation. This chain is Large ribosomal subunit protein bL12, found in Phenylobacterium zucineum (strain HLK1).